The primary structure comprises 245 residues: tRNA1(Val) (adenine(37)-N6)-methyltransferase (245 aa).

This sequence belongs to the methyltransferase superfamily. tRNA (adenine-N(6)-)-methyltransferase family.

Its subcellular location is the cytoplasm. It catalyses the reaction adenosine(37) in tRNA1(Val) + S-adenosyl-L-methionine = N(6)-methyladenosine(37) in tRNA1(Val) + S-adenosyl-L-homocysteine + H(+). Specifically methylates the adenine in position 37 of tRNA(1)(Val) (anticodon cmo5UAC). The protein is tRNA1(Val) (adenine(37)-N6)-methyltransferase of Erwinia tasmaniensis (strain DSM 17950 / CFBP 7177 / CIP 109463 / NCPPB 4357 / Et1/99).